A 768-amino-acid polypeptide reads, in one-letter code: Phosphoribosylformylglycinamidine synthase subunit PurL (768 aa).

Residue His44 is part of the active site. ATP-binding residues include Tyr47 and Lys86. Glu88 contacts Mg(2+). Residues 89 to 92 and Arg111 contribute to the substrate site; that span reads SHNH. The active-site Proton acceptor is the His90. A Mg(2+)-binding site is contributed by Asp112. Residue Gln235 coordinates substrate. Asp263 serves as a coordination point for Mg(2+). 307–309 contributes to the substrate binding site; that stretch reads ESQ. Residues Asp518 and Gly555 each contribute to the ATP site. Mg(2+) is bound at residue Asn556. Ser558 lines the substrate pocket.

The protein belongs to the FGAMS family. Monomer. Part of the FGAM synthase complex composed of 1 PurL, 1 PurQ and 2 PurS subunits.

It localises to the cytoplasm. It catalyses the reaction N(2)-formyl-N(1)-(5-phospho-beta-D-ribosyl)glycinamide + L-glutamine + ATP + H2O = 2-formamido-N(1)-(5-O-phospho-beta-D-ribosyl)acetamidine + L-glutamate + ADP + phosphate + H(+). It participates in purine metabolism; IMP biosynthesis via de novo pathway; 5-amino-1-(5-phospho-D-ribosyl)imidazole from N(2)-formyl-N(1)-(5-phospho-D-ribosyl)glycinamide: step 1/2. Its function is as follows. Part of the phosphoribosylformylglycinamidine synthase complex involved in the purines biosynthetic pathway. Catalyzes the ATP-dependent conversion of formylglycinamide ribonucleotide (FGAR) and glutamine to yield formylglycinamidine ribonucleotide (FGAM) and glutamate. The FGAM synthase complex is composed of three subunits. PurQ produces an ammonia molecule by converting glutamine to glutamate. PurL transfers the ammonia molecule to FGAR to form FGAM in an ATP-dependent manner. PurS interacts with PurQ and PurL and is thought to assist in the transfer of the ammonia molecule from PurQ to PurL. The sequence is that of Phosphoribosylformylglycinamidine synthase subunit PurL from Synechococcus sp. (strain JA-2-3B'a(2-13)) (Cyanobacteria bacterium Yellowstone B-Prime).